Here is a 70-residue protein sequence, read N- to C-terminus: Putative membrane protein insertion efficiency factor (70 aa).

It belongs to the UPF0161 family.

It localises to the cell membrane. Could be involved in insertion of integral membrane proteins into the membrane. The protein is Putative membrane protein insertion efficiency factor of Lachnoclostridium phytofermentans (strain ATCC 700394 / DSM 18823 / ISDg) (Clostridium phytofermentans).